The following is a 253-amino-acid chain: tRNA uridine(34) hydroxylase (253 aa).

Positions 127 to 221 constitute a Rhodanese domain; it reads HGRPLVLLDT…YFEDVGGEGY (95 aa). Cys181 acts as the Cysteine persulfide intermediate in catalysis.

This sequence belongs to the TrhO family.

It carries out the reaction uridine(34) in tRNA + AH2 + O2 = 5-hydroxyuridine(34) in tRNA + A + H2O. Its function is as follows. Catalyzes oxygen-dependent 5-hydroxyuridine (ho5U) modification at position 34 in tRNAs. This is tRNA uridine(34) hydroxylase from Xanthomonas campestris pv. campestris (strain 8004).